We begin with the raw amino-acid sequence, 72 residues long: uncharacterized protein (72 aa).

The tract at residues 1–53 is disordered; that stretch reads MTNEPSTSTPTSTSTSTSTSTSTSTTTLTSTSSTPTSTSTSTSTSTSTSTSTS.

This is an uncharacterized protein from Dictyostelium discoideum (Social amoeba).